Reading from the N-terminus, the 637-residue chain is Tumor protein p73 (637 aa).

A transactivation region spans residues 1–46 (MAQSTTTSPDGGTTFEHLWSSLEPDSTYFDLPQSSRGNNEVVGGTD). Threonine 27 carries the phosphothreonine modification. Tyrosine 28 carries the phosphotyrosine; by SRC and HCK modification. The interval 78–104 (RAASASPYTPEHAASVPTHSPYAQPSS) is disordered. Residues 94-104 (PTHSPYAQPSS) are compositionally biased toward polar residues. Residue tyrosine 99 is modified to Phosphotyrosine. The interval 131–310 (FQQSSTAKSA…DRKADEDHYR (180 aa)) is DNA-binding. Zn(2+) contacts are provided by cysteine 194, histidine 197, cysteine 258, and cysteine 262. Positions 301–311 (DRKADEDHYRE) are enriched in basic and acidic residues. Residues 301 to 351 (DRKADEDHYREQQALNESSAKNGAASKRAFKQSPPAVPALGPGVKKRRHGD) form a disordered region. The interval 345-380 (KKRRHGDEDTYYLQVRGRENFEILMKLKESLELMEL) is interaction with HIPK2. The interval 345 to 386 (KKRRHGDEDTYYLQVRGRENFEILMKLKESLELMELVPQPLV) is oligomerization. The PPxY motif motif lies at 483-487 (PPPPY). The SAM domain occupies 485–551 (PPYHADPSLV…WRGLQDLKQG (67 aa)). Residue lysine 628 forms a Glycyl lysine isopeptide (Lys-Gly) (interchain with G-Cter in SUMO); in isoform Alpha linkage. Lysine 628 is covalently cross-linked (Glycyl lysine isopeptide (Lys-Gly) (interchain with G-Cter in SUMO2)).

This sequence belongs to the p53 family. In terms of assembly, found in a complex with p53/TP53 and CABLES1. The C-terminal oligomerization domain binds to the ABL1 tyrosine kinase SH3 domain. Interacts with HECW2. Isoforms Alpha and Beta interact with HIPK2. Isoform Alpha interacts with RANBP9. Interacts with WWOX. Isoform Beta interacts homotypically and with p53, whereas isoform Alpha does not. Interacts (via SAM domain) with FBXO45 (via B30.2/SPRY domain). Interacts with YAP1 (phosphorylated form). Interacts with HCK (via SH3 domain); this inhibits TP73 activity and degradation. Requires Zn(2+) as cofactor. Isoform Alpha (but not isoform Beta) is sumoylated on Lys-628, which potentiates proteasomal degradation but does not affect transcriptional activity. Post-translationally, polyubiquitinated by RCHY1/PIRH2; leading to its degradation by the proteasome.

The protein resides in the nucleus. The protein localises to the cytoplasm. In terms of biological role, participates in the apoptotic response to DNA damage. May be a tumor suppressor protein. Is an activator of FOXJ1 expression, essential for the positive regulation of lung ciliated cell differentiation. The polypeptide is Tumor protein p73 (TP73) (Chlorocebus aethiops (Green monkey)).